Consider the following 236-residue polypeptide: Small ribosomal subunit protein uS2c (236 aa).

Belongs to the universal ribosomal protein uS2 family.

The protein localises to the plastid. Its subcellular location is the chloroplast. The polypeptide is Small ribosomal subunit protein uS2c (rps2) (Nymphaea alba (White water-lily)).